The following is a 529-amino-acid chain: Peptide chain release factor 3 (529 aa).

A tr-type G domain is found at 11–280 (AKRRTFAIIS…GLVEWAPAPM (270 aa)). Residues 20-27 (SHPDAGKT), 88-92 (DTPGH), and 142-145 (NKLD) each bind GTP.

This sequence belongs to the TRAFAC class translation factor GTPase superfamily. Classic translation factor GTPase family. PrfC subfamily.

The protein localises to the cytoplasm. Functionally, increases the formation of ribosomal termination complexes and stimulates activities of RF-1 and RF-2. It binds guanine nucleotides and has strong preference for UGA stop codons. It may interact directly with the ribosome. The stimulation of RF-1 and RF-2 is significantly reduced by GTP and GDP, but not by GMP. This is Peptide chain release factor 3 from Shigella boydii serotype 18 (strain CDC 3083-94 / BS512).